The primary structure comprises 193 residues: Probable GTP-binding protein EngB (193 aa).

One can recognise an EngB-type G domain in the interval 22-193; sequence SFPEIVFAGR…LAHFDQYICQ (172 aa). GTP contacts are provided by residues 30 to 37, 57 to 61, 75 to 78, 142 to 145, and 172 to 174; these read GRSNVGKS, GKTRL, DLPG, TKYD, and YSS. Residues Ser37 and Thr59 each contribute to the Mg(2+) site.

The protein belongs to the TRAFAC class TrmE-Era-EngA-EngB-Septin-like GTPase superfamily. EngB GTPase family. It depends on Mg(2+) as a cofactor.

In terms of biological role, necessary for normal cell division and for the maintenance of normal septation. This is Probable GTP-binding protein EngB from Pelodictyon phaeoclathratiforme (strain DSM 5477 / BU-1).